The primary structure comprises 435 residues: Adenylosuccinate synthetase (435 aa).

GTP-binding positions include 13–19 and 41–43; these read GDEGKGK and GHT. Aspartate 14 serves as the catalytic Proton acceptor. Positions 14 and 41 each coordinate Mg(2+). IMP-binding positions include 14–17, 39–42, threonine 131, arginine 145, glutamine 226, threonine 241, and arginine 309; these read DEGK and NAGH. Histidine 42 (proton donor) is an active-site residue. 305-311 is a substrate binding site; that stretch reads TVTGRKR. GTP-binding positions include arginine 311, 337–339, and 419–421; these read KLD and STG.

It belongs to the adenylosuccinate synthetase family. As to quaternary structure, homodimer. Mg(2+) is required as a cofactor.

Its subcellular location is the cytoplasm. It carries out the reaction IMP + L-aspartate + GTP = N(6)-(1,2-dicarboxyethyl)-AMP + GDP + phosphate + 2 H(+). It participates in purine metabolism; AMP biosynthesis via de novo pathway; AMP from IMP: step 1/2. In terms of biological role, plays an important role in the de novo pathway of purine nucleotide biosynthesis. Catalyzes the first committed step in the biosynthesis of AMP from IMP. In Dechloromonas aromatica (strain RCB), this protein is Adenylosuccinate synthetase.